A 107-amino-acid polypeptide reads, in one-letter code: Nucleoid-associated protein Hhal_0231 (107 aa).

Disordered regions lie at residues 1 to 24 (MKGG…KAQE) and 82 to 107 (VQRE…KLPF). Residues 15 to 24 (MQEDMQKAQE) show a composition bias toward basic and acidic residues.

This sequence belongs to the YbaB/EbfC family. In terms of assembly, homodimer.

The protein resides in the cytoplasm. It is found in the nucleoid. In terms of biological role, binds to DNA and alters its conformation. May be involved in regulation of gene expression, nucleoid organization and DNA protection. This Halorhodospira halophila (strain DSM 244 / SL1) (Ectothiorhodospira halophila (strain DSM 244 / SL1)) protein is Nucleoid-associated protein Hhal_0231.